The following is a 465-amino-acid chain: Clusterin-like protein 1 (465 aa).

Positions 1-20 (MKPSLLVFTVYLLWLKDCHC) are cleaved as a signal peptide. A coiled-coil region spans residues 62 to 106 (MMERREEEHTNLMKTLKKCKEEKQEALKLMNEVQEHLEEEESLCQ). 4 disulfides stabilise this stretch: C105–C333, C116–C325, C119–C322, and C124–C315. N-linked (GlcNAc...) asparagine glycosylation is found at N196, N257, N285, N311, N351, N412, and N430.

Belongs to the clusterin family. As to expression, retina-specific (at protein level). In the light-adapted retina, expressed in the outer segment of cone photoreceptors. In the dark-adapted retina, strongly expressed in the outer plexiform layer in the region of contact between the cone pedicles and second order neurons with little or no expression in the cone photoreceptor outer segments.

Its subcellular location is the secreted. This Canis lupus familiaris (Dog) protein is Clusterin-like protein 1 (CLUL1).